The sequence spans 121 residues: MARVKRGVTTHARHKKILKLAKGYRGRAKSCYRIALQRVEKALQYAYRDRRTRKRDFRSLWIIRINAAAREHGLTYGRFMHGLTLAGIDLNRKILAEMAVNYKDDFAKLVETVSGKLAENS.

This sequence belongs to the bacterial ribosomal protein bL20 family.

In terms of biological role, binds directly to 23S ribosomal RNA and is necessary for the in vitro assembly process of the 50S ribosomal subunit. It is not involved in the protein synthesizing functions of that subunit. The chain is Large ribosomal subunit protein bL20 from Wolbachia sp. subsp. Drosophila simulans (strain wRi).